A 698-amino-acid polypeptide reads, in one-letter code: Sulfhydryl oxidase 2 (698 aa).

Residues 1 to 21 form the signal peptide; sequence MAAAGAAVARSPGIGAGPALR. The Thioredoxin domain occupies 34-178; it reads PRLLVLLAAA…RQTMIDFLQN (145 aa). A glycan (N-linked (GlcNAc...) asparagine) is linked at asparagine 77. Residues cysteine 91 and cysteine 94 each act as nucleophile in the active site. Disulfide bonds link cysteine 91/cysteine 94 and cysteine 122/cysteine 131. Asparagine 178, asparagine 218, and asparagine 266 each carry an N-linked (GlcNAc...) asparagine glycan. A disulfide bond links cysteine 418 and cysteine 430. The 110-residue stretch at 421–530 folds into the ERV/ALR sulfhydryl oxidase domain; that stretch reads SRSELRGYPC…EDPRFPKLQW (110 aa). FAD contacts are provided by residues arginine 426, tryptophan 433, histidine 437, glutamate 478, histidine 482, 505 to 512, lysine 527, and tryptophan 530; that span reads WKKHNMVN. Cysteine 476 and cysteine 479 are disulfide-bonded. Cysteine 536 and cysteine 539 are disulfide-bonded. The tract at residues 570–624 is disordered; the sequence is TYSADQGDSSEGGTLARGEEEEKRLTPPEVSHGDRDTQSVRPPGALGPRPALPES. Residues 572-581 show a composition bias toward polar residues; that stretch reads SADQGDSSEG. A Phosphoserine modification is found at serine 579. A compositionally biased stretch (basic and acidic residues) spans 586–607; that stretch reads RGEEEEKRLTPPEVSHGDRDTQ. Positions 610–622 are enriched in low complexity; that stretch reads RPPGALGPRPALP. Residues 662-682 traverse the membrane as a helical segment; sequence SLCVVLYVASSLFLMVMYFFF.

The protein belongs to the quiescin-sulfhydryl oxidase (QSOX) family. Requires FAD as cofactor. As to expression, expressed in pancreas, brain, placenta, kidney, heart and fetal tissues. Weakly expressed in lung, liver and skeletal muscles.

It is found in the membrane. The protein resides in the secreted. The protein localises to the cell membrane. It localises to the nucleus membrane. The enzyme catalyses 2 R'C(R)SH + O2 = R'C(R)S-S(R)CR' + H2O2. Its function is as follows. Catalyzes the oxidation of sulfhydryl groups in peptide and protein thiols to disulfides with the reduction of oxygen to hydrogen peroxide. May contribute to disulfide bond formation in a variety of secreted proteins. Also seems to play a role in regulating the sensitization of neuroblastoma cells for interferon-gamma-induced apoptosis. The chain is Sulfhydryl oxidase 2 (QSOX2) from Homo sapiens (Human).